Reading from the N-terminus, the 279-residue chain is Beta-lactamase (279 aa).

The N-terminal stretch at M1–A21 is a signal peptide. S66 serves as the catalytic Acyl-ester intermediate. A disulfide bridge links C73 with C119. Residue K230–G232 coordinates substrate.

It belongs to the class-A beta-lactamase family.

It carries out the reaction a beta-lactam + H2O = a substituted beta-amino acid. The sequence is that of Beta-lactamase from Klebsiella pneumoniae.